The primary structure comprises 215 residues: Adenylate kinase (215 aa).

10-15 (GAGKGT) is a binding site for ATP. The tract at residues 30–59 (STGDIFRKNIKEKTELGQKVEGLLAQGKLV) is NMP. AMP contacts are provided by residues Thr31, Arg36, 57–59 (KLV), 85–88 (GFPR), and Gln92. Residues 126-163 (GRRVCPSCGASYHIDNNPTKVDGICDACQTPVIQREDD) are LID. Arg127 lines the ATP pocket. Residues Cys130 and Cys133 each contribute to the Zn(2+) site. 136 to 137 (SY) provides a ligand contact to ATP. 2 residues coordinate Zn(2+): Cys150 and Cys153. Residues Arg160 and Arg171 each contribute to the AMP site. Residue Leu199 coordinates ATP.

The protein belongs to the adenylate kinase family. Monomer.

The protein resides in the cytoplasm. It catalyses the reaction AMP + ATP = 2 ADP. It functions in the pathway purine metabolism; AMP biosynthesis via salvage pathway; AMP from ADP: step 1/1. Catalyzes the reversible transfer of the terminal phosphate group between ATP and AMP. Plays an important role in cellular energy homeostasis and in adenine nucleotide metabolism. This Finegoldia magna (strain ATCC 29328 / DSM 20472 / WAL 2508) (Peptostreptococcus magnus) protein is Adenylate kinase.